Consider the following 154-residue polypeptide: Large ribosomal subunit protein uL13 (154 aa).

Belongs to the universal ribosomal protein uL13 family. Part of the 50S ribosomal subunit.

Functionally, this protein is one of the early assembly proteins of the 50S ribosomal subunit, although it is not seen to bind rRNA by itself. It is important during the early stages of 50S assembly. In Bartonella tribocorum (strain CIP 105476 / IBS 506), this protein is Large ribosomal subunit protein uL13.